The primary structure comprises 167 residues: NAD(P)H-quinone oxidoreductase subunit I, chloroplastic (167 aa).

4Fe-4S ferredoxin-type domains lie at glycine 55 to lysine 84 and leucine 95 to glutamate 124. [4Fe-4S] cluster is bound by residues cysteine 64, cysteine 67, cysteine 70, cysteine 74, cysteine 104, cysteine 107, cysteine 110, and cysteine 114.

This sequence belongs to the complex I 23 kDa subunit family. In terms of assembly, NDH is composed of at least 16 different subunits, 5 of which are encoded in the nucleus. [4Fe-4S] cluster serves as cofactor.

It localises to the plastid. The protein localises to the chloroplast thylakoid membrane. The catalysed reaction is a plastoquinone + NADH + (n+1) H(+)(in) = a plastoquinol + NAD(+) + n H(+)(out). It carries out the reaction a plastoquinone + NADPH + (n+1) H(+)(in) = a plastoquinol + NADP(+) + n H(+)(out). NDH shuttles electrons from NAD(P)H:plastoquinone, via FMN and iron-sulfur (Fe-S) centers, to quinones in the photosynthetic chain and possibly in a chloroplast respiratory chain. The immediate electron acceptor for the enzyme in this species is believed to be plastoquinone. Couples the redox reaction to proton translocation, and thus conserves the redox energy in a proton gradient. In Aethionema grandiflorum (Persian stone-cress), this protein is NAD(P)H-quinone oxidoreductase subunit I, chloroplastic.